Reading from the N-terminus, the 754-residue chain is 1,4-alpha-glucan branching enzyme GlgB (754 aa).

The active-site Nucleophile is Asp-431. The active-site Proton donor is Glu-484.

It belongs to the glycosyl hydrolase 13 family. GlgB subfamily. In terms of assembly, monomer.

The catalysed reaction is Transfers a segment of a (1-&gt;4)-alpha-D-glucan chain to a primary hydroxy group in a similar glucan chain.. Its pathway is glycan biosynthesis; glycogen biosynthesis. In terms of biological role, catalyzes the formation of the alpha-1,6-glucosidic linkages in glycogen by scission of a 1,4-alpha-linked oligosaccharide from growing alpha-1,4-glucan chains and the subsequent attachment of the oligosaccharide to the alpha-1,6 position. The protein is 1,4-alpha-glucan branching enzyme GlgB of Prochlorococcus marinus (strain MIT 9515).